The following is a 483-amino-acid chain: Serine/threonine-protein phosphatase 2A regulatory subunit phr2AB (483 aa).

2 WD repeats span residues 22 to 61 (SDAN…QSSK) and 88 to 129 (EIEE…IKQV). The tract at residues 132–152 (SATTTGPSYNGSLASNNTRSP) is disordered. 4 WD repeats span residues 206-244 (AHAY…ECFN), 255-295 (DLTE…LCDN), 314-352 (EIIS…KPVK), and 369-410 (ENDC…DVCL). A disordered region spans residues 421 to 443 (TKTLTTKMKLRSSKKEPKKPEDI). Residues 433 to 443 (SKKEPKKPEDI) are compositionally biased toward basic and acidic residues. The WD 7 repeat unit spans residues 449 to 483 (EYTKKTLHCAWHPKDNLIAVGAANTVYLYAATENK).

It belongs to the phosphatase 2A regulatory subunit B family. In terms of assembly, PP2A consists of a trimeric holoenzyme, composed of a 37 kDa catalytic subunit (C subunit) and a 65 kDa constant regulatory subunit (A subunit), that associates with a variety of regulatory subunits (B subunit) such as phr2AB (B55) and psrA (B56 homolog). The trimer may partially dissociates into a core 'AC' dimer equally active compared to the trimer.

The protein resides in the cytoplasm. It is found in the cytosol. It localises to the cytoskeleton. The protein localises to the microtubule organizing center. Its subcellular location is the centrosome. In terms of biological role, the B regulatory subunit might modulate substrate selectivity and catalytic activity, and might also direct the localization of the catalytic enzyme to a particular subcellular compartment. The protein is Serine/threonine-protein phosphatase 2A regulatory subunit phr2AB (phr2aB) of Dictyostelium discoideum (Social amoeba).